The sequence spans 430 residues: MSLTLEFLLLLIVLILSHHAHSGSIVKFLPGFEGPLPFELETGYIGIGEEEEVQLFYYFIKSEKNPEEDPLLLWLSGGPGCSSLTGLLFENGPVALKFEVYNGSVPSLVSTTYSWTKMANIIFLDQPVGSGFSYSRTPLVDKISDTGEVKRIYEFLQKWLSKHQQFFSNPFYVGGDSYSGMIVPPLVQEIGKGNYQINLQGYILGNPITDTESEQNYQIPYAHGMALISDELYKSMERICKGNYVKVDSLNTKCYKLIKDYQKCIHKLNKYHILLPDCDITSPDCFLYRYTLITFWANNKSVREALQVNKGSIGKWVQCNYKNISYNYDIKSSVAYHMKNSIDGYRSLIYNGDHDMMVPFLATQAWIRSLNYSITDDWKPWMINDQIAGYTRSYSNKMTFATIKGSGHTAEYKPKETSIMFKRWISAQPL.

An N-terminal signal peptide occupies residues 1 to 22 (MSLTLEFLLLLIVLILSHHAHS). Intrachain disulfides connect C81/C319, C240/C254, and C278/C285. The N-linked (GlcNAc...) asparagine glycan is linked to N102. Residue S177 is part of the active site. N-linked (GlcNAc...) asparagine glycans are attached at residues N299 and N323. Residue D355 is part of the active site. A glycan (N-linked (GlcNAc...) asparagine) is linked at N371. H408 is a catalytic residue.

Belongs to the peptidase S10 family. As to expression, expression not detected.

The protein resides in the secreted. The catalysed reaction is 2 1-O-(trans-sinapoyl)-beta-D-glucose = 1,2-di-O-sinapoyl beta-D-glucose + D-glucose. Its function is as follows. Catalyzes the formation of 1,2-bis-O-sinapoyl beta-D-glucoside. The chain is Serine carboxypeptidase-like 13 (SCPL13) from Arabidopsis thaliana (Mouse-ear cress).